The chain runs to 294 residues: uncharacterized protein (294 aa).

Positions L259 to K294 are disordered. The span at R283–K294 shows a compositional bias: basic residues.

This is an uncharacterized protein from Homo sapiens (Human).